We begin with the raw amino-acid sequence, 471 residues long: Light-independent protochlorophyllide reductase subunit N (471 aa).

[4Fe-4S] cluster contacts are provided by Cys-22, Cys-47, and Cys-107.

This sequence belongs to the BchN/ChlN family. In terms of assembly, protochlorophyllide reductase is composed of three subunits; ChlL, ChlN and ChlB. Forms a heterotetramer of two ChlB and two ChlN subunits. The cofactor is [4Fe-4S] cluster.

It is found in the plastid. It localises to the chloroplast. It catalyses the reaction chlorophyllide a + oxidized 2[4Fe-4S]-[ferredoxin] + 2 ADP + 2 phosphate = protochlorophyllide a + reduced 2[4Fe-4S]-[ferredoxin] + 2 ATP + 2 H2O. Its pathway is porphyrin-containing compound metabolism; chlorophyll biosynthesis (light-independent). Functionally, component of the dark-operative protochlorophyllide reductase (DPOR) that uses Mg-ATP and reduced ferredoxin to reduce ring D of protochlorophyllide (Pchlide) to form chlorophyllide a (Chlide). This reaction is light-independent. The NB-protein (ChlN-ChlB) is the catalytic component of the complex. In Huperzia lucidula (Shining clubmoss), this protein is Light-independent protochlorophyllide reductase subunit N.